The chain runs to 396 residues: NADH-quinone oxidoreductase subunit D (396 aa).

Belongs to the complex I 49 kDa subunit family. In terms of assembly, NDH-1 is composed of 14 different subunits. Subunits NuoB, C, D, E, F, and G constitute the peripheral sector of the complex.

The protein resides in the cell inner membrane. The enzyme catalyses a quinone + NADH + 5 H(+)(in) = a quinol + NAD(+) + 4 H(+)(out). In terms of biological role, NDH-1 shuttles electrons from NADH, via FMN and iron-sulfur (Fe-S) centers, to quinones in the respiratory chain. The immediate electron acceptor for the enzyme in this species is believed to be ubiquinone. Couples the redox reaction to proton translocation (for every two electrons transferred, four hydrogen ions are translocated across the cytoplasmic membrane), and thus conserves the redox energy in a proton gradient. The chain is NADH-quinone oxidoreductase subunit D from Methylorubrum populi (strain ATCC BAA-705 / NCIMB 13946 / BJ001) (Methylobacterium populi).